Consider the following 911-residue polypeptide: Anoctamin-6 (911 aa).

At M1 to A301 the chain is on the cytoplasmic side. Residues W302 to L322 traverse the membrane as a helical segment. Over Y323–S376 the chain is Extracellular. Residue N330 is glycosylated (N-linked (GlcNAc...) asparagine). Cystine bridges form between C331–C372, C338–C365, C349–C807, C352–C356, and C596–C601. N362 carries an N-linked (GlcNAc...) asparagine glycan. A helical membrane pass occupies residues F377–W397. Residues K398 to C456 are Cytoplasmic-facing. A helical membrane pass occupies residues A457–Y477. Over R478–S510 the chain is Extracellular. Residue N494 is glycosylated (N-linked (GlcNAc...) asparagine). A helical membrane pass occupies residues I511–V531. The Cytoplasmic segment spans residues A532 to T552. Residues M553 to F573 form a helical membrane-spanning segment. Residues K574–L602 lie on the Extracellular side of the membrane. Residues L603–I622 traverse the membrane as a helical segment. Residues Q623–L664 lie on the Cytoplasmic side of the membrane. Ca(2+)-binding residues include E624, E667, and E670. Helical transmembrane passes span F665 to F685 and P686 to K706. Topologically, residues L707 to G723 are cytoplasmic. Residues A724–I744 form a helical membrane-spanning segment. Residues A745–A837 lie on the Extracellular side of the membrane. 3 N-linked (GlcNAc...) asparagine glycosylation sites follow: N778, N785, and N803. A helical membrane pass occupies residues F838–P858. Topologically, residues D859–E911 are cytoplasmic.

The protein belongs to the anoctamin family. In terms of assembly, homodimer. As to expression, predominant expression seen in epithelial tissues. Also found in skeletal system where it is primarily expressed in osteoblasts.

It localises to the cell membrane. The catalysed reaction is a 1,2-diacyl-sn-glycero-3-phospho-L-serine(in) = a 1,2-diacyl-sn-glycero-3-phospho-L-serine(out). The enzyme catalyses a beta-D-galactosyl-(1&lt;-&gt;1')-N-acylsphing-4-enine(out) = a beta-D-galactosyl-(1&lt;-&gt;1')-N-acylsphing-4-enine(in). It carries out the reaction a 1,2-diacyl-sn-glycero-3-phosphocholine(in) = a 1,2-diacyl-sn-glycero-3-phosphocholine(out). With respect to regulation, exhibits synergistic gating by Ca(2+) and voltage. Inhibited by some non-specific cation channel blockers such as: ruthenium red, 2-aminoethyl diphenylborinate (2APB), gadolinium and cadmium ions. In terms of biological role, small-conductance calcium-activated nonselective cation (SCAN) channel which acts as a regulator of phospholipid scrambling in platelets, osteoblasts and fetal thymocytes. Phospholipid scrambling results in surface exposure of phosphatidylserine which in platelets is essential to trigger the clotting system whereas in osteoblasts is essential for the deposition of hydroxyapatite during bone mineralization. Has calcium-dependent phospholipid scramblase activity; scrambles phosphatidylserine, phosphatidylcholine and galactosylceramide. Can generate outwardly rectifying chloride channel currents in airway epithelial cells and Jurkat T lymphocytes. This is Anoctamin-6 (Ano6) from Mus musculus (Mouse).